Consider the following 394-residue polypeptide: Phosphoglycerate kinase (394 aa).

Substrate is bound by residues 21-23 (DFN), R36, 59-62 (HLGR), R118, and R151. S183 bears the Phosphoserine mark. Residue K201 participates in ATP binding. Residue T299 is modified to Phosphothreonine. ATP is bound by residues E323 and 350 to 353 (GGDS).

The protein belongs to the phosphoglycerate kinase family. As to quaternary structure, monomer.

Its subcellular location is the cytoplasm. It catalyses the reaction (2R)-3-phosphoglycerate + ATP = (2R)-3-phospho-glyceroyl phosphate + ADP. It functions in the pathway carbohydrate degradation; glycolysis; pyruvate from D-glyceraldehyde 3-phosphate: step 2/5. The polypeptide is Phosphoglycerate kinase (Bacillus pumilus (strain SAFR-032)).